A 125-amino-acid polypeptide reads, in one-letter code: Small ribosomal subunit protein eS8 (125 aa).

Residues 1–20 form a disordered region; sequence MIWQGRSRRKPSGGFYRKAR.

This sequence belongs to the eukaryotic ribosomal protein eS8 family. In terms of assembly, part of the 30S ribosomal subunit.

The polypeptide is Small ribosomal subunit protein eS8 (rps8e) (Archaeoglobus fulgidus (strain ATCC 49558 / DSM 4304 / JCM 9628 / NBRC 100126 / VC-16)).